The sequence spans 387 residues: METVAAIKTLIQQLAQSTDQFGRAEINDALRELQYSLETPFDTVMRMSLDTCQVAVARIGSDLGLFKHLSQCASPQSAEELADHLGCGRELMSRLLRYMASVRMVQQTDDIKYISSNITQTLAVPGLEAGMRHAFENLWPVLMALPDFLAERKYPDIVDAKDTAFQKAFNTDQDCFHWLATQPTRIANFKVLLTDERTPNFLSTFPLEKELGSWSAEPEKALFVDIGGGMGHACIRLREKYPNQPGRVILQDLPPVLQAAQATLPLSGIESMPHNFHTPQPVQGAKFYFLRLILRDFPDHQALEILQNIVPAMDAESRIVIDDGVPPEKGARWAETGTDICIMSALGSKERTQRQWEELAAKAGLQLQALYQYTWPVVNAAMVFSLQ.

Substrate is bound at residue 135–148; that stretch reads FENLWPVLMALPDF. The substrate binding stretch occupies residues 175–195; the sequence is CFHWLATQPTRIANFKVLLTD. Residues 227-228, Asp252, 275-276, and Arg291 contribute to the S-adenosyl-L-methionine site; these read GG and NF.

Belongs to the class I-like SAM-binding methyltransferase superfamily. Cation-independent O-methyltransferase family.

Its function is as follows. O-methyltransferase; part of the gene cluster 23 that mediates the biosynthesis of a family of 2-pyridones known as leporins. The hybrid PKS-NRPS synthetase lepA and the enoyl reductase lepG are responsible for fusion of phenylalanine with a hexaketide and subsequent release of the stable tetramic acid precursor, pre-leporin C. Because lepA lacks a designated enoylreductase (ER) domain, the required activity is provided the enoyl reductase lepG. It is possible that the dehydrogenase lepF also participates in production of pre-leporin C. Cytochrome P450 monooxygenase lepH is then required for the ring expansion step to yield leporin C. Leporin C is then presumably further oxidized by the N-hydroxylase lepD to form leporin B. LepI may possess a function in biosynthesis upstream of lepA. Leporin B is further oxidized in the presence of ferric ion to give the leporin B trimer-iron chelate, but whether or not this reaction is catalyzed by an enzyme in the pathway or by ferric ion is not determined yet. The sequence is that of O-methyltransferase lepI from Aspergillus flavus (strain ATCC 200026 / FGSC A1120 / IAM 13836 / NRRL 3357 / JCM 12722 / SRRC 167).